The sequence spans 394 residues: HORMA domain-containing protein 1 (394 aa).

Positions Gln-24 to Val-226 constitute an HORMA domain. Residues Lys-306–Ile-394 are disordered. Residues Leu-311–Thr-325 show a composition bias toward polar residues. The span at Lys-353 to Gln-362 shows a compositional bias: basic and acidic residues. A Phosphoserine modification is found at Ser-376. The Nuclear localization signal motif lies at Lys-383–Lys-386.

Interacts with HORMAD2. Interacts with IHO1. In terms of processing, phosphorylated at Ser-377 in a SPO11-dependent manner.

It localises to the nucleus. The protein resides in the chromosome. Its function is as follows. Plays a key role in meiotic progression. Regulates 3 different functions during meiosis: ensures that sufficient numbers of processed DNA double-strand breaks (DSBs) are available for successful homology search by increasing the steady-state numbers of single-stranded DSB ends. Promotes synaptonemal-complex formation independently of its role in homology search. Plays a key role in the male mid-pachytene checkpoint and the female meiotic prophase checkpoint: required for efficient build-up of ATR activity on unsynapsed chromosome regions, a process believed to form the basis of meiotic silencing of unsynapsed chromatin (MSUC) and meiotic prophase quality control in both sexes. The polypeptide is HORMA domain-containing protein 1 (HORMAD1) (Sus scrofa (Pig)).